We begin with the raw amino-acid sequence, 115 residues long: Beta-2-microglobulin (115 aa).

The signal sequence occupies residues methionine 1 to alanine 18. The Ig-like C1-type domain occupies proline 23–glycine 114.

This sequence belongs to the beta-2-microglobulin family. In terms of assembly, heterodimer of an alpha chain and a beta chain. Beta-2-microglobulin is the beta-chain of major histocompatibility complex class I molecules.

Its subcellular location is the secreted. Its function is as follows. Component of the class I major histocompatibility complex (MHC). Involved in the presentation of peptide antigens to the immune system. The sequence is that of Beta-2-microglobulin (b2m) from Paralichthys olivaceus (Bastard halibut).